Here is a 72-residue protein sequence, read N- to C-terminus: MRSLPDIFYNFIHLQLYSLFSLLLVIISHNLGNTYPLIVRYLIQVITYNYQLFLYIIDWMVDIHGGINYSNR.

This is an uncharacterized protein from Homo sapiens (Human).